The following is a 1008-amino-acid chain: Histone deacetylase complex subunit SAP130-A (1008 aa).

Polar residues predominate over residues 1–31; sequence MNSQQFPRQAASMPSPQVSNSGASVGQNVQG. Disordered regions lie at residues 1–44, 113–134, 415–435, and 617–720; these read MNSQ…DVQS, SKST…SAVP, IQSD…HRAS, and TPGG…PATI. A compositionally biased stretch (basic and acidic residues) spans 35-44; that stretch reads EVARDMDVQS. The segment covering 618 to 644 has biased composition (polar residues); that stretch reads PGGTTVMQSHSQSPGIGSSPAQGSSPR. Residues 678 to 697 are compositionally biased toward low complexity; it reads ADQPSAAASLPSSHHPAAAV.

This sequence belongs to the SAP130 family.

It is found in the nucleus. Functionally, acts as a transcriptional repressor. The chain is Histone deacetylase complex subunit SAP130-A (sap130-a) from Xenopus laevis (African clawed frog).